The following is a 274-amino-acid chain: uncharacterized protein (274 aa).

This is an uncharacterized protein from Treponema pallidum (strain Nichols).